A 980-amino-acid polypeptide reads, in one-letter code: Alanine--tRNA ligase, mitochondrial (980 aa).

A mitochondrion-targeting transit peptide spans 1–23; that stretch reads MAVALAAAAGKLRRAIGRSCPWQ. ATP is bound by residues Arg105, His123, Trp205, and 235–237; that span reads LWN. Residues Asn237 and Asp260 each coordinate L-alanine. Gly264 contacts ATP. Positions 627, 631, 744, and 748 each coordinate Zn(2+).

The protein belongs to the class-II aminoacyl-tRNA synthetase family. In terms of assembly, monomer. Requires Zn(2+) as cofactor.

It is found in the mitochondrion. It catalyses the reaction tRNA(Ala) + L-alanine + ATP = L-alanyl-tRNA(Ala) + AMP + diphosphate. The catalysed reaction is (S)-lactate + ATP + H(+) = (S)-lactoyl-AMP + diphosphate. The enzyme catalyses (S)-lactoyl-AMP + L-lysyl-[protein] = N(6)-[(S)-lactoyl]-L-lysyl-[protein] + AMP + 2 H(+). In terms of biological role, catalyzes the attachment of alanine to tRNA(Ala) in a two-step reaction: alanine is first activated by ATP to form Ala-AMP and then transferred to the acceptor end of tRNA(Ala). Also edits incorrectly charged tRNA(Ala) via its editing domain. In presence of high levels of lactate, also acts as a protein lactyltransferase that mediates lactylation of lysine residues in target proteins, such as CGAS. Acts as an inhibitor of cGAS/STING signaling by catalyzing lactylation of CGAS, preventing the formation of liquid-like droplets in which CGAS is activated. The sequence is that of Alanine--tRNA ligase, mitochondrial (Aars2) from Mus musculus (Mouse).